We begin with the raw amino-acid sequence, 139 residues long: Arsenate reductase (139 aa).

Catalysis depends on nucleophile residues cysteine 10, cysteine 82, and cysteine 89. 2 disulfide bridges follow: cysteine 10/cysteine 82 and cysteine 82/cysteine 89.

The protein belongs to the low molecular weight phosphotyrosine protein phosphatase family. Thioredoxin-coupled ArsC subfamily. Monomer.

It is found in the cytoplasm. It catalyses the reaction arsenate + [thioredoxin]-dithiol + H(+) = arsenite + [thioredoxin]-disulfide + H2O. With respect to regulation, activity is potassium and sulfate-independent. In terms of biological role, catalyzes the reduction of arsenate [As(V)] to arsenite [As(III)]. In vitro, can dephosphorylate para-nitrophenyl phosphate (pNPP). The sequence is that of Arsenate reductase from Bacillus subtilis (strain 168).